Reading from the N-terminus, the 347-residue chain is UDP-N-acetylenolpyruvoylglucosamine reductase (347 aa).

Residues 15-187 form the FAD-binding PCMH-type domain; sequence FGIEQTCSYL…TAIGLKLPKR (173 aa). Arginine 163 is an active-site residue. Residue serine 233 is the Proton donor of the active site. The active site involves glutamate 328.

Belongs to the MurB family. The cofactor is FAD.

It localises to the cytoplasm. The catalysed reaction is UDP-N-acetyl-alpha-D-muramate + NADP(+) = UDP-N-acetyl-3-O-(1-carboxyvinyl)-alpha-D-glucosamine + NADPH + H(+). Its pathway is cell wall biogenesis; peptidoglycan biosynthesis. Its function is as follows. Cell wall formation. In Vibrio parahaemolyticus serotype O3:K6 (strain RIMD 2210633), this protein is UDP-N-acetylenolpyruvoylglucosamine reductase.